Here is a 123-residue protein sequence, read N- to C-terminus: Potassium voltage-gated channel subfamily E member 2 (123 aa).

Residues Asn-6 and Asn-29 are each glycosylated (N-linked (GlcNAc...) asparagine). The helical transmembrane segment at 49–69 threads the bilayer; the sequence is VILYLMVMIGMFAFIVVAILV. Over 70-123 the chain is Cytoplasmic; it reads STVKSKRREHSQDPYHQYIVEDWQQKYRSQILHLEDSKATIHENLGATGFTVSP.

Belongs to the potassium channel KCNE family. In terms of assembly, interacts with KCNB1. Associates with KCNH2/ERG1. May associate with KCNQ2 and KCNQ3. Associates with HCN1 and probably HCN2. Heteromultimer with KCNC2. Interacts with KCNC2. Interacts with KCNQ1; forms a heterooligomer complex that targets to the membrane raft and leading to currents with an apparently instantaneous activation, a rapid deactivation process and a linear current-voltage relationship and decreases the amplitude of the outward current.

It localises to the cell membrane. The protein localises to the apical cell membrane. Its function is as follows. Ancillary protein that functions as a regulatory subunit of the voltage-gated potassium (Kv) channel complex composed of pore-forming and potassium-conducting alpha subunits and of regulatory beta subunits. KCNE2 beta subunit modulates the gating kinetics and enhances stability of the channel complex. Alters the gating of the delayed rectifier Kv channel containing KCNB1 alpha subunit. Associates with KCNH2/HERG alpha subunit Kv channel to form the rapidly activating component of the delayed rectifying potassium current (IKr) in heart. May associate with KCNQ2 and/or KCNQ3 alpha subunits to modulate the native M-type current. May associate with HCN1 and HCN2 channel subunits to increase potassium current. Forms a heterooligomer complex with KCNQ1/KVLQT1 alpha subunits which leads to currents with an apparently instantaneous activation, a rapid deactivation process and a linear current-voltage relationship and decreases the amplitude of the outward current. KCNQ1-KCNE2 channel associates with Na(+)-coupled myo-inositol symporter in the apical membrane of choroid plexus epithelium and regulates the myo-inositol gradient between blood and cerebrospinal fluid with an impact on neuron excitability. This chain is Potassium voltage-gated channel subfamily E member 2 (Kcne2), found in Cavia porcellus (Guinea pig).